The chain runs to 453 residues: Bifunctional protein GlmU (453 aa).

Residues 1–225 (MNIVILAAGT…EWETLGVNSK (225 aa)) are pyrophosphorylase. UDP-N-acetyl-alpha-D-glucosamine is bound by residues 6 to 9 (LAAG), K20, Q71, 76 to 77 (GT), 98 to 100 (YGD), G135, E150, N165, and N223. Residue D100 coordinates Mg(2+). N223 is a Mg(2+) binding site. The interval 226 to 246 (QQLAELERIHQRNVADALLVA) is linker. Residues 247–453 (GVTLADPARL…GYVRPTKKKS (207 aa)) are N-acetyltransferase. UDP-N-acetyl-alpha-D-glucosamine is bound by residues R329 and K347. The active-site Proton acceptor is the H359. Positions 362 and 373 each coordinate UDP-N-acetyl-alpha-D-glucosamine. Acetyl-CoA-binding positions include A376, 382-383 (NY), S401, and A419.

The protein in the N-terminal section; belongs to the N-acetylglucosamine-1-phosphate uridyltransferase family. It in the C-terminal section; belongs to the transferase hexapeptide repeat family. Homotrimer. It depends on Mg(2+) as a cofactor.

Its subcellular location is the cytoplasm. The catalysed reaction is alpha-D-glucosamine 1-phosphate + acetyl-CoA = N-acetyl-alpha-D-glucosamine 1-phosphate + CoA + H(+). The enzyme catalyses N-acetyl-alpha-D-glucosamine 1-phosphate + UTP + H(+) = UDP-N-acetyl-alpha-D-glucosamine + diphosphate. It functions in the pathway nucleotide-sugar biosynthesis; UDP-N-acetyl-alpha-D-glucosamine biosynthesis; N-acetyl-alpha-D-glucosamine 1-phosphate from alpha-D-glucosamine 6-phosphate (route II): step 2/2. It participates in nucleotide-sugar biosynthesis; UDP-N-acetyl-alpha-D-glucosamine biosynthesis; UDP-N-acetyl-alpha-D-glucosamine from N-acetyl-alpha-D-glucosamine 1-phosphate: step 1/1. Its pathway is bacterial outer membrane biogenesis; LPS lipid A biosynthesis. Catalyzes the last two sequential reactions in the de novo biosynthetic pathway for UDP-N-acetylglucosamine (UDP-GlcNAc). The C-terminal domain catalyzes the transfer of acetyl group from acetyl coenzyme A to glucosamine-1-phosphate (GlcN-1-P) to produce N-acetylglucosamine-1-phosphate (GlcNAc-1-P), which is converted into UDP-GlcNAc by the transfer of uridine 5-monophosphate (from uridine 5-triphosphate), a reaction catalyzed by the N-terminal domain. This chain is Bifunctional protein GlmU, found in Paraburkholderia xenovorans (strain LB400).